The chain runs to 301 residues: Polyamine aminopropyltransferase (301 aa).

The 237-residue stretch at 4-240 (WHWLLEWQTP…GLWGFVYGGV (237 aa)) folds into the PABS domain. S-methyl-5'-thioadenosine is bound at residue Gln-33. The spermidine site is built by His-64 and Glu-89. S-methyl-5'-thioadenosine is bound by residues Asp-109 and 141 to 142 (DG). The Proton acceptor role is filled by Asp-159.

The protein belongs to the spermidine/spermine synthase family. Homodimer or homotetramer.

It localises to the cytoplasm. It carries out the reaction S-adenosyl 3-(methylsulfanyl)propylamine + putrescine = S-methyl-5'-thioadenosine + spermidine + H(+). It participates in amine and polyamine biosynthesis; spermidine biosynthesis; spermidine from putrescine: step 1/1. Its function is as follows. Catalyzes the irreversible transfer of a propylamine group from the amino donor S-adenosylmethioninamine (decarboxy-AdoMet) to putrescine (1,4-diaminobutane) to yield spermidine. In Saccharolobus islandicus (strain L.S.2.15 / Lassen #1) (Sulfolobus islandicus), this protein is Polyamine aminopropyltransferase.